Reading from the N-terminus, the 138-residue chain is Cysteine desulfuration protein SufE (138 aa).

Cys-51 functions as the Cysteine persulfide intermediate in the catalytic mechanism.

The protein belongs to the SufE family. As to quaternary structure, homodimer. Interacts with SufS.

It localises to the cytoplasm. It functions in the pathway cofactor biosynthesis; iron-sulfur cluster biosynthesis. Its function is as follows. Participates in cysteine desulfuration mediated by SufS. Cysteine desulfuration mobilizes sulfur from L-cysteine to yield L-alanine and constitutes an essential step in sulfur metabolism for biosynthesis of a variety of sulfur-containing biomolecules. Functions as a sulfur acceptor for SufS, by mediating the direct transfer of the sulfur atom from the S-sulfanylcysteine of SufS, an intermediate product of cysteine desulfuration process. The polypeptide is Cysteine desulfuration protein SufE (Salmonella choleraesuis (strain SC-B67)).